The chain runs to 522 residues: E3 ubiquitin-protein ligase TRIM65 (522 aa).

Position 2 is an N-acetylalanine (Ala-2). The RING-type zinc finger occupies Cys-13 to Arg-52. The B box-type zinc-finger motif lies at Ser-92–Val-134. Positions Asp-141 to Leu-229 form a coiled coil. Phosphoserine is present on Ser-187. One can recognise a B30.2/SPRY domain in the interval Ala-316–Thr-509.

Belongs to the TRIM/RBCC family. As to quaternary structure, homo-multimerizes. Interacts with ARRDC4.

It is found in the cytoplasm. It carries out the reaction S-ubiquitinyl-[E2 ubiquitin-conjugating enzyme]-L-cysteine + [acceptor protein]-L-lysine = [E2 ubiquitin-conjugating enzyme]-L-cysteine + N(6)-ubiquitinyl-[acceptor protein]-L-lysine.. It functions in the pathway protein modification; protein ubiquitination. Functionally, E3 ubiquitin ligase that plays a role in several processes including innate immnity, autophagy or inflammation. Negatively regulates miRNAs by modulating the ubiquitination and stability of TNRC6A, a protein involved in RNA-mediated gene silencing by both micro-RNAs (miRNAs) and short interfering RNAs. This ubiquitination results in the suppressed expression of miR-138-5p leading to increased autophagy. Upon enteroviral infection, promotes 'Lys-63'-mediated ubiquitination activation of IFIH1/MDA5 leading to innate signaling cascade. Mechanistically, selectively recognizes MDA5 filaments that occur on dsRNAs. Also plays a role in limitation of inflammation through different mechanisms. First, promotes 'Lys-48'-mediated ubiquitination of VCAM1 leading to its degradation and limitation of LPS-induced lung inflammation. In addition, negatively regulates inflammasome activation by promoting 'lys48'-linked ubiquitination of NLRP3 which is critical for the inhibition of NLRP3 inflammasome activation in resting macrophages. The protein is E3 ubiquitin-protein ligase TRIM65 (Trim65) of Mus musculus (Mouse).